Reading from the N-terminus, the 337-residue chain is MTEPKDIVLKESEEVEGIPIEGPWLDDVSSLEEVLDYYERIGFQATHLGKAIEIWKKVEKRRAEGKEVRVFLGYTSNIISSGLRELVAWLVKEGKIDVIVTTAGGIEEDFIKALKPFILGDWHVNDALMREKGINRIGNIFVPNDRYIEFEKYMIPFFERVLEIEKERGKPLTASEFIYELGRYMDEKLGKEKERSVIYWAYKRNVPIFCPAITDGSIGDMLYFFKEERGDRELIIDIANDIVKLNNLAVTAKETASIILGGSLPKHAIINANLFRGGTDYAIYITTAVPWDGSLSGAPPSEGVSWGKIRAKADYVEIWADATLVFPLLVWKVMKAP.

The active-site Nucleophile is the Lys308.

The protein belongs to the deoxyhypusine synthase family. NAD(+) serves as cofactor.

The catalysed reaction is [eIF5A protein]-L-lysine + spermidine = [eIF5A protein]-deoxyhypusine + propane-1,3-diamine. It participates in protein modification; eIF5A hypusination. Catalyzes the NAD-dependent oxidative cleavage of spermidine and the subsequent transfer of the butylamine moiety of spermidine to the epsilon-amino group of a specific lysine residue of the eIF-5A precursor protein to form the intermediate deoxyhypusine residue. The sequence is that of Probable deoxyhypusine synthase from Thermococcus kodakarensis (strain ATCC BAA-918 / JCM 12380 / KOD1) (Pyrococcus kodakaraensis (strain KOD1)).